Reading from the N-terminus, the 372-residue chain is Aminomethyltransferase (372 aa).

It belongs to the GcvT family. In terms of assembly, the glycine cleavage system is composed of four proteins: P, T, L and H.

The enzyme catalyses N(6)-[(R)-S(8)-aminomethyldihydrolipoyl]-L-lysyl-[protein] + (6S)-5,6,7,8-tetrahydrofolate = N(6)-[(R)-dihydrolipoyl]-L-lysyl-[protein] + (6R)-5,10-methylene-5,6,7,8-tetrahydrofolate + NH4(+). In terms of biological role, the glycine cleavage system catalyzes the degradation of glycine. The chain is Aminomethyltransferase from Prochlorococcus marinus (strain NATL1A).